We begin with the raw amino-acid sequence, 347 residues long: S-adenosylmethionine:tRNA ribosyltransferase-isomerase (347 aa).

The protein belongs to the QueA family. Monomer.

It is found in the cytoplasm. The catalysed reaction is 7-aminomethyl-7-carbaguanosine(34) in tRNA + S-adenosyl-L-methionine = epoxyqueuosine(34) in tRNA + adenine + L-methionine + 2 H(+). It functions in the pathway tRNA modification; tRNA-queuosine biosynthesis. Its function is as follows. Transfers and isomerizes the ribose moiety from AdoMet to the 7-aminomethyl group of 7-deazaguanine (preQ1-tRNA) to give epoxyqueuosine (oQ-tRNA). This is S-adenosylmethionine:tRNA ribosyltransferase-isomerase from Bordetella bronchiseptica (strain ATCC BAA-588 / NCTC 13252 / RB50) (Alcaligenes bronchisepticus).